A 63-amino-acid polypeptide reads, in one-letter code: Metallothionein-like protein type 3 (63 aa).

The protein belongs to the metallothionein superfamily. Type 15 family.

In terms of biological role, metallothioneins have a high content of cysteine residues that bind various heavy metals. The polypeptide is Metallothionein-like protein type 3 (Actinidia deliciosa (Kiwi)).